The primary structure comprises 142 residues: Bacilliredoxin ABC2448 (142 aa).

This sequence belongs to the bacilliredoxin family.

This Shouchella clausii (strain KSM-K16) (Alkalihalobacillus clausii) protein is Bacilliredoxin ABC2448.